A 115-amino-acid chain; its full sequence is MSEFDKKLNTLGVDRISVSPYKKWSRGYMEPGNIGNGYVSGLKVDAGVVDKTDDMVLDGIGSYDRAETKNAYIGQINMTTASSFSGVGGTVISYDILRNPEVDKAKPLFTEKQWD.

The residue at position 83 (serine 83) is a Pyruvic acid (Ser).

The proenzyme is a hexamer of identical pi chains; each pi chain monomer is cleaved to form a small (or beta) chain and a large (or alpha) chain by non-hydrolytic self-catalysis. Pyruvate is required as a cofactor.

The enzyme catalyses L-histidine + H(+) = histamine + CO2. In Lentilactobacillus buchneri (Lactobacillus buchneri), this protein is Histidine decarboxylase proenzyme.